The chain runs to 748 residues: Sulfhydryl oxidase 1 (748 aa).

An N-terminal signal peptide occupies residues 1–32 (MRRCGRLSGPPSLLLLLLLLSPLLFSGPGAYA). A Thioredoxin domain is found at 33-159 (ARLSVLYSSS…RMRLIDALES (127 aa)). Active-site nucleophile residues include Cys73 and Cys76. 2 cysteine pairs are disulfide-bonded: Cys73–Cys76 and Cys104–Cys113. N-linked (GlcNAc...) asparagine glycosylation is found at Asn133 and Asn246. A disulfide bond links Cys396 and Cys408. In terms of domain architecture, ERV/ALR sulfhydryl oxidase spans 399-506 (SEPHFRGFPC…EDPHFPKVQW (108 aa)). Residues Arg404, Trp411, His415, Asp454, His458, 481–488 (WTSHNRVN), Lys503, and Trp506 contribute to the FAD site. Cys452 and Cys455 form a disulfide bridge. A disulfide bond links Cys512 and Cys515. The segment at 581–647 (GHEQAASAES…QENAPGQQHL (67 aa)) is disordered. The span at 628–638 (ERMEDHQRDMQ) shows a compositional bias: basic and acidic residues. The chain crosses the membrane as a helical span at residues 711 to 731 (ISLCVGLYSVSFMGLLAMYTY).

The protein belongs to the quiescin-sulfhydryl oxidase (QSOX) family. As to quaternary structure, monomer. FAD is required as a cofactor. N-glycosylated. O-glycosylated on Thr and Ser residues. In terms of tissue distribution, detected in skin (at protein level). Expressed in the seminal vesicles and skin.

It localises to the golgi apparatus membrane. The protein localises to the secreted. The enzyme catalyses 2 R'C(R)SH + O2 = R'C(R)S-S(R)CR' + H2O2. Functionally, catalyzes the oxidation of sulfhydryl groups in peptide and protein thiols to disulfides with the reduction of oxygen to hydrogen peroxide. Plays a role in disulfide bond formation in a variety of extracellular proteins. In fibroblasts, required for normal incorporation of laminin into the extracellular matrix, and thereby for normal cell-cell adhesion and cell migration. This chain is Sulfhydryl oxidase 1 (Qsox1), found in Mus musculus (Mouse).